The chain runs to 332 residues: MSSGAPSGSSMSSTPGSPPPRAGGPNSVSFKDLCCLFCCPPFPSSIVSKLAFMPPEPSYTITEDNKLVLIEGRAAWPHQEVDMANCVEMRITRTRRRNRVACTMIRPLPNSHFTLLFSHGNAVDLGQMTSFLYGLGFHLNCNVFSYDYSGYGCSTGKPSEKNLYADITAAFELLKSEFGVPKEKIILYGQSIGTVPSVDLASREDLAALVLHSPLMSGMRVAFPGTTTTWCCDAFPSIEKVPRVKCPTLVIHGTDDEVIDFSHGVSIYERCPTSVEPLWVPGAGHNDVELHAAYLERLRSFIDMEASAIRVTAPITNATSTNSRTISNGTSS.

Over residues 1–15 (MSSGAPSGSSMSSTP) the composition is skewed to low complexity. Residues 1-24 (MSSGAPSGSSMSSTPGSPPPRAGG) are disordered. Active-site charge relay system residues include Ser191, Asp256, and His285.

It belongs to the AB hydrolase superfamily. ABHD17 family. In terms of processing, palmitoylated on cysteine residues located in a cysteine cluster at the N-terminus which promotes membrane localization and localization to sensory neuron endings. In terms of tissue distribution, expressed in a subset of neurons including AIY, HSN, ADF, AFD, AWC, AWB and NSM, hypodermis, pharyngeal muscle and intestine.

It localises to the cell membrane. It is found in the cytoplasmic vesicle membrane. It catalyses the reaction S-hexadecanoyl-L-cysteinyl-[protein] + H2O = L-cysteinyl-[protein] + hexadecanoate + H(+). Functionally, hydrolyzes fatty acids from S-acylated cysteine residues in proteins. Acts in sensory neurons including AWC to regulate starvation-induced thermotaxis plasticity and salt learning behavior. The polypeptide is Alpha/beta hydrolase domain-containing protein aho-3 (Caenorhabditis elegans).